Consider the following 220-residue polypeptide: MKVHKEGTGLLLTLFTILFIVNITLYHTVGKGMLFYSVAFVSTVLFLLVLNFFRSPFRRFPYDSEGLVIAPADGTIVAIEEVMENEILHKKCLQISIFMSIFNVHANWFPVNGTVKHVSHQNGRFMAAYLPKSSTENERSAVVITTRNGVDVLARQIAGAMARRIVTYAKPGEKCHVDEQMGFIKFGSRVDVYLPVGTEVLIEMDQKVTGNQTPIARLSK.

Ser188 functions as the Schiff-base intermediate with substrate; via pyruvic acid in the catalytic mechanism. Ser188 bears the Pyruvic acid (Ser); by autocatalysis mark.

This sequence belongs to the phosphatidylserine decarboxylase family. PSD-A subfamily. In terms of assembly, heterodimer of a large membrane-associated beta subunit and a small pyruvoyl-containing alpha subunit. Requires pyruvate as cofactor. Is synthesized initially as an inactive proenzyme. Formation of the active enzyme involves a self-maturation process in which the active site pyruvoyl group is generated from an internal serine residue via an autocatalytic post-translational modification. Two non-identical subunits are generated from the proenzyme in this reaction, and the pyruvate is formed at the N-terminus of the alpha chain, which is derived from the carboxyl end of the proenzyme. The post-translation cleavage follows an unusual pathway, termed non-hydrolytic serinolysis, in which the side chain hydroxyl group of the serine supplies its oxygen atom to form the C-terminus of the beta chain, while the remainder of the serine residue undergoes an oxidative deamination to produce ammonia and the pyruvoyl prosthetic group on the alpha chain.

The protein localises to the cell membrane. It catalyses the reaction a 1,2-diacyl-sn-glycero-3-phospho-L-serine + H(+) = a 1,2-diacyl-sn-glycero-3-phosphoethanolamine + CO2. It participates in phospholipid metabolism; phosphatidylethanolamine biosynthesis; phosphatidylethanolamine from CDP-diacylglycerol: step 2/2. Functionally, catalyzes the formation of phosphatidylethanolamine (PtdEtn) from phosphatidylserine (PtdSer). This chain is Phosphatidylserine decarboxylase proenzyme, found in Parabacteroides distasonis (strain ATCC 8503 / DSM 20701 / CIP 104284 / JCM 5825 / NCTC 11152).